The following is a 232-amino-acid chain: Large ribosomal subunit protein uL1 (232 aa).

Belongs to the universal ribosomal protein uL1 family. As to quaternary structure, part of the 50S ribosomal subunit.

Functionally, binds directly to 23S rRNA. The L1 stalk is quite mobile in the ribosome, and is involved in E site tRNA release. Its function is as follows. Protein L1 is also a translational repressor protein, it controls the translation of the L11 operon by binding to its mRNA. This chain is Large ribosomal subunit protein uL1, found in Chelativorans sp. (strain BNC1).